Here is a 486-residue protein sequence, read N- to C-terminus: NADH-quinone oxidoreductase subunit N 1 (486 aa).

A run of 14 helical transmembrane segments spans residues 15-35, 46-66, 72-92, 111-128, 131-151, 166-186, 208-228, 241-261, 276-296, 303-323, 331-351, 375-395, 410-432, and 455-475; these read FLPE…DPVI, ISLI…GIAG, MLMV…VGIL, YHAL…MAAS, LIMV…LAGY, FLLG…IYGL, FVGI…SAAP, PTPV…AIFL, QPLV…AAIL, MLAY…TAHS, MFYL…VSVL, AAMF…GGFF, IWLT…RILV, and FALI…GWVL.

It belongs to the complex I subunit 2 family. NDH-1 is composed of 14 different subunits. Subunits NuoA, H, J, K, L, M, N constitute the membrane sector of the complex.

It is found in the cell inner membrane. The enzyme catalyses a quinone + NADH + 5 H(+)(in) = a quinol + NAD(+) + 4 H(+)(out). NDH-1 shuttles electrons from NADH, via FMN and iron-sulfur (Fe-S) centers, to quinones in the respiratory chain. The immediate electron acceptor for the enzyme in this species is believed to be ubiquinone. Couples the redox reaction to proton translocation (for every two electrons transferred, four hydrogen ions are translocated across the cytoplasmic membrane), and thus conserves the redox energy in a proton gradient. The protein is NADH-quinone oxidoreductase subunit N 1 of Solibacter usitatus (strain Ellin6076).